Here is an 835-residue protein sequence, read N- to C-terminus: Cap-specific mRNA (nucleoside-2'-O-)-methyltransferase 1 (835 aa).

The segment at 1–67 is disordered; sequence MKRRTDPECT…EGKQHSSDSF (67 aa). The Bipartite nuclear localization signal signature appears at 2 to 19; it reads KRRTDPECTAPIKKQKKR. S28, S31, S53, S66, and S91 each carry phosphoserine. Over residues 37–54 the composition is skewed to polar residues; that stretch reads SSVSHGAKASTTSLSGSD. Positions 57–67 are enriched in basic and acidic residues; it reads TEGKQHSSDSF. Residues 87–133 enclose the G-patch domain; that stretch reads YNSVSQKLMAKMGFREGEGLGKYSQGRKDIVEASSQKGRRGLGLTLR. K108 bears the N6-acetyllysine mark. Substrate contacts are provided by residues 203-207 and R218; that span reads KSVFD. Residues 231–450 enclose the RrmJ-type SAM-dependent 2'-O-MTase domain; it reads FFLNRAAMKM…ERYVVCKGLK (220 aa). An S-adenosyl-L-methionine-binding site is contributed by N234. K239 is a catalytic residue. Residues 277 to 283 and 335 to 336 contribute to the S-adenosyl-L-methionine site; these read CAGPGGF and DI. D364 is an active-site residue. A substrate-binding site is contributed by 374–376; that stretch reads NLQ. The Proton acceptor role is filled by K404. N439 serves as a coordination point for substrate. Residues 727-835 are interaction with POLR2A; it reads SSGTPKLSYT…VLSFIQMHRA (109 aa). Residues 752 to 786 form the WW domain; the sequence is RTVNEPWTMGFSKSFKKKFFYNKKTKDSTFDLPAD.

Interacts with POLR2A (via C-terminus).

The protein localises to the nucleus. It carries out the reaction a 5'-end (N(7)-methyl 5'-triphosphoguanosine)-ribonucleoside in mRNA + S-adenosyl-L-methionine = a 5'-end (N(7)-methyl 5'-triphosphoguanosine)-(2'-O-methyl-ribonucleoside) in mRNA + S-adenosyl-L-homocysteine + H(+). Functionally, S-adenosyl-L-methionine-dependent methyltransferase that mediates mRNA cap1 2'-O-ribose methylation to the 5'-cap structure of mRNAs. Methylates the ribose of the first nucleotide of a m(7)GpppG-capped mRNA and small nuclear RNA (snRNA) to produce m(7)GpppRm (cap1). Displays a preference for cap0 transcripts. Cap1 modification is linked to higher levels of translation. May be involved in the interferon response pathway. The chain is Cap-specific mRNA (nucleoside-2'-O-)-methyltransferase 1 (CMTR1) from Homo sapiens (Human).